Here is a 596-residue protein sequence, read N- to C-terminus: uncharacterized protein (596 aa).

The chain crosses the membrane as a helical span at residues 7-26 (FWPILLGFTVLVAAGLYYVV).

The protein resides in the membrane. This is an uncharacterized protein from Sinorhizobium fredii (strain NBRC 101917 / NGR234).